A 34-amino-acid polypeptide reads, in one-letter code: Cytochrome b6-f complex subunit 8 (34 aa).

Residues 3-23 (IFQIGWAALAAIFTFSIAMVV) traverse the membrane as a helical segment.

The protein belongs to the PetN family. In terms of assembly, the 4 large subunits of the cytochrome b6-f complex are cytochrome b6, subunit IV (17 kDa polypeptide, PetD), cytochrome f and the Rieske protein, while the 4 small subunits are PetG, PetL, PetM and PetN. The complex functions as a dimer.

It localises to the cellular thylakoid membrane. Its function is as follows. Component of the cytochrome b6-f complex, which mediates electron transfer between photosystem II (PSII) and photosystem I (PSI), cyclic electron flow around PSI, and state transitions. This chain is Cytochrome b6-f complex subunit 8, found in Prochlorococcus marinus subsp. pastoris (strain CCMP1986 / NIES-2087 / MED4).